A 76-amino-acid chain; its full sequence is Amyloid protein A (76 aa).

It belongs to the SAA family. Expressed by the liver; secreted in plasma.

The protein resides in the secreted. Major acute phase reactant. Apolipoprotein of the HDL complex. This Macaca mulatta (Rhesus macaque) protein is Amyloid protein A (SAA1).